Here is a 379-residue protein sequence, read N- to C-terminus: MLASVPAPRPAKKDSAASRRKSASKSTGAAVKDGSSARVSASGAAESPKQSCAQVHGVDFQSLVHATQEETLRAVVSSLPTTGLQATQIGRARQLVQQILHHRSPEDRVFLAYTSNMISCGLRDTFTYLARERLVDCFISSAGGIEEDVIKCGGSTLLGQFGQDGRALRRRGINRIGNLLVPNDNYCWFEDFFTPVLESVQEAQRASRWKTHTAPSEIIEAMGAAIAKNHPDTCTSSLVYWCYRNGISVFSPAFTDGSMGDMIYFYNFSHKGLVVDPLEDVVRLRKLAAKERGRNLAIVLGGGLPKHHLLRNVPMDAVVMVTTGLEADGCVSSGVLADDVACGLLREETETVRVQGDATVVFPLMLIAETAATREGAAA.

A disordered region spans residues 1-48 (MLASVPAPRPAKKDSAASRRKSASKSTGAAVKDGSSARVSASGAAESP). Low complexity predominate over residues 36 to 47 (SARVSASGAAES). Residues 115-119 (SNMIS), 141-143 (SAG), Glu147, and Asp256 contribute to the NAD(+) site. 146–147 (EE) serves as a coordination point for spermidine. Asp261 is a spermidine binding site. Gly302 contributes to the NAD(+) binding site. Spermidine is bound at residue His307. 323–324 (TG) lines the NAD(+) pocket. Spermidine contacts are provided by residues 329–331 (GCV) and 338–344 (DDVACGL). Position 357 to 358 (357 to 358 (DA)) interacts with NAD(+).

This sequence belongs to the deoxyhypusine synthase family.

The chain is Inactive deoxyhypusine synthase from Leishmania donovani.